Consider the following 373-residue polypeptide: Putative F-box/kelch-repeat protein At3g19410 (373 aa).

The F-box domain occupies methionine 1–lysine 46. Kelch repeat units lie at residues arginine 101–glycine 148, tyrosine 149–serine 200, and lysine 329–serine 373.

This is Putative F-box/kelch-repeat protein At3g19410 from Arabidopsis thaliana (Mouse-ear cress).